The following is a 193-amino-acid chain: Probable type II restriction enzyme HpyAORF263P (193 aa).

The protein belongs to the BsaWI type II restriction endonuclease family.

The enzyme catalyses Endonucleolytic cleavage of DNA to give specific double-stranded fragments with terminal 5'-phosphates.. Its function is as follows. A P subtype probable restriction enzyme that recognizes the double-stranded sequence CCGG; the cleavage site is unknown. The chain is Probable type II restriction enzyme HpyAORF263P from Helicobacter pylori (strain ATCC 700392 / 26695) (Campylobacter pylori).